The chain runs to 717 residues: DNA ligase (717 aa).

Residues 41–45 (DARYD), 90–91 (SL), and Glu124 contribute to the NAD(+) site. The N6-AMP-lysine intermediate role is filled by Lys126. NAD(+) is bound by residues Arg147, Glu183, Lys299, and Lys323. Positions 428, 431, 446, and 452 each coordinate Zn(2+). Positions 636–717 (ADYSPVAGKT…WLQLINEHHI (82 aa)) constitute a BRCT domain.

The protein belongs to the NAD-dependent DNA ligase family. LigA subfamily. It depends on Mg(2+) as a cofactor. Mn(2+) serves as cofactor.

It carries out the reaction NAD(+) + (deoxyribonucleotide)n-3'-hydroxyl + 5'-phospho-(deoxyribonucleotide)m = (deoxyribonucleotide)n+m + AMP + beta-nicotinamide D-nucleotide.. DNA ligase that catalyzes the formation of phosphodiester linkages between 5'-phosphoryl and 3'-hydroxyl groups in double-stranded DNA using NAD as a coenzyme and as the energy source for the reaction. It is essential for DNA replication and repair of damaged DNA. This Bartonella bacilliformis (strain ATCC 35685 / KC583 / Herrer 020/F12,63) protein is DNA ligase.